Reading from the N-terminus, the 243-residue chain is Pyridoxine 5'-phosphate synthase (243 aa).

Asparagine 9 lines the 3-amino-2-oxopropyl phosphate pocket. 11–12 contributes to the 1-deoxy-D-xylulose 5-phosphate binding site; it reads DH. Arginine 20 contacts 3-amino-2-oxopropyl phosphate. The Proton acceptor role is filled by histidine 45. 2 residues coordinate 1-deoxy-D-xylulose 5-phosphate: arginine 47 and histidine 52. Glutamate 72 (proton acceptor) is an active-site residue. Threonine 102 is a binding site for 1-deoxy-D-xylulose 5-phosphate. Histidine 193 (proton donor) is an active-site residue. 3-amino-2-oxopropyl phosphate-binding positions include glycine 194 and 215 to 216; that span reads GH.

It belongs to the PNP synthase family. Homooctamer; tetramer of dimers.

The protein localises to the cytoplasm. It carries out the reaction 3-amino-2-oxopropyl phosphate + 1-deoxy-D-xylulose 5-phosphate = pyridoxine 5'-phosphate + phosphate + 2 H2O + H(+). Its pathway is cofactor biosynthesis; pyridoxine 5'-phosphate biosynthesis; pyridoxine 5'-phosphate from D-erythrose 4-phosphate: step 5/5. Its function is as follows. Catalyzes the complicated ring closure reaction between the two acyclic compounds 1-deoxy-D-xylulose-5-phosphate (DXP) and 3-amino-2-oxopropyl phosphate (1-amino-acetone-3-phosphate or AAP) to form pyridoxine 5'-phosphate (PNP) and inorganic phosphate. The polypeptide is Pyridoxine 5'-phosphate synthase (Escherichia coli O6:H1 (strain CFT073 / ATCC 700928 / UPEC)).